Consider the following 280-residue polypeptide: MSNPESLKKQVEPPGYNELFMVEDVCNVDLEQGLDLCKPEKVNKQSQRSRQSRQSLFTNTIKPQKDKMNIKTNKIKEFLNDPFTEFSKFHNSYYPDGRISTRSNFRWPLLIIWSIIIVFAVDKKFEVQKFLSIWINENRFYSEIWVPIAIYVCLLVLMLLSLIFFAEFAVLALRVTGVIIAVLGAVLGMIIAVLGMIIAALGMIIAALGATITGLLYFGHWALYKLVILSLGFKIVTPGDVCVSNTLPTHNGETALHSETTVGSDIEQIELQNMPTPVKK.

4 consecutive transmembrane segments (helical) span residues 107–127, 144–164, 178–198, and 199–219; these read WPLL…KFEV, IWVP…SLIF, VIIA…GMII, and AALG…LYFG.

This sequence belongs to the UPF0494 family.

It localises to the cytoplasm. Its subcellular location is the vacuole. The protein localises to the membrane. The sequence is that of UPF0494 membrane protein C750.06c from Schizosaccharomyces pombe (strain 972 / ATCC 24843) (Fission yeast).